A 359-amino-acid polypeptide reads, in one-letter code: Protein URE2 (359 aa).

Residues 39 to 82 (FSAGVNNNNNNSSSSNNNNNNNNNAQNNNSGRNGSQSNDNGNNI) are disordered. Over residues 44–81 (NNNNNNSSSSNNNNNNNNNAQNNNSGRNGSQSNDNGNN) the composition is skewed to low complexity. Residues 117 to 201 (EGYTLFSHRS…HLVNKYYKET (85 aa)) enclose the GST N-terminal domain. The 150-residue stretch at 210-359 (DLADQSQINA…PAVIKALRGE (150 aa)) folds into the GST C-terminal domain.

It belongs to the GST superfamily. Homodimer.

In terms of biological role, plays an important role in the cellular response to the nitrogen source. URE2 gene plays a major part in the repression of GLN1 and GDH2 genes by glutamine, and is required for the inactivation of glutamine synthetase. URE2 gene product may catalytically inactivate GLN3 in response to an increase in the intracellular concentration of glutamine. The sequence is that of Protein URE2 (URE2) from Saccharomyces paradoxus (Yeast).